The sequence spans 459 residues: Cysteine--tRNA ligase (459 aa).

A Zn(2+)-binding site is contributed by Cys31. The 'HIGH' region signature appears at 33–43 (PTVYDNPHIGN). Residues Cys216, His241, and Glu245 each contribute to the Zn(2+) site. The 'KMSKS' region motif lies at 274–278 (KMSKS). Lys277 is an ATP binding site.

This sequence belongs to the class-I aminoacyl-tRNA synthetase family. Monomer. Requires Zn(2+) as cofactor.

It is found in the cytoplasm. The enzyme catalyses tRNA(Cys) + L-cysteine + ATP = L-cysteinyl-tRNA(Cys) + AMP + diphosphate. The protein is Cysteine--tRNA ligase of Rickettsia massiliae (strain Mtu5).